Here is a 67-residue protein sequence, read N- to C-terminus: ATP synthase F(0) complex subunit 8 (67 aa).

The helical transmembrane segment at 8-24 (TWFITIVSMLLSLFILM) threads the bilayer. At Lys54 the chain carries N6-acetyllysine; alternate. N6-succinyllysine; alternate is present on Lys54. Position 57 is an N6-acetyllysine (Lys57).

This sequence belongs to the ATPase protein 8 family. In terms of assembly, component of the ATP synthase complex composed at least of ATP5F1A/subunit alpha, ATP5F1B/subunit beta, ATP5MC1/subunit c (homooctomer), MT-ATP6/subunit a, MT-ATP8/subunit 8, ATP5ME/subunit e, ATP5MF/subunit f, ATP5MG/subunit g, ATP5MK/subunit k, ATP5MJ/subunit j, ATP5F1C/subunit gamma, ATP5F1D/subunit delta, ATP5F1E/subunit epsilon, ATP5PF/subunit F6, ATP5PB/subunit b, ATP5PD/subunit d, ATP5PO/subunit OSCP. ATP synthase complex consists of a soluble F(1) head domain (subunits alpha(3) and beta(3)) - the catalytic core - and a membrane F(0) domain - the membrane proton channel (subunits c, a, 8, e, f, g, k and j). These two domains are linked by a central stalk (subunits gamma, delta, and epsilon) rotating inside the F1 region and a stationary peripheral stalk (subunits F6, b, d, and OSCP). Interacts with PRICKLE3.

The protein localises to the mitochondrion membrane. Functionally, subunit 8, of the mitochondrial membrane ATP synthase complex (F(1)F(0) ATP synthase or Complex V) that produces ATP from ADP in the presence of a proton gradient across the membrane which is generated by electron transport complexes of the respiratory chain. ATP synthase complex consist of a soluble F(1) head domain - the catalytic core - and a membrane F(1) domain - the membrane proton channel. These two domains are linked by a central stalk rotating inside the F(1) region and a stationary peripheral stalk. During catalysis, ATP synthesis in the catalytic domain of F(1) is coupled via a rotary mechanism of the central stalk subunits to proton translocation. In vivo, can only synthesize ATP although its ATP hydrolase activity can be activated artificially in vitro. Part of the complex F(0) domain. The polypeptide is ATP synthase F(0) complex subunit 8 (Dasypus novemcinctus (Nine-banded armadillo)).